The chain runs to 170 residues: Transcription factor E (170 aa).

The HTH TFE/IIEalpha-type domain occupies M1–S93.

The protein belongs to the TFE family. In terms of assembly, monomer. Interaction with RNA polymerase subunits RpoF and RpoE is necessary for Tfe stimulatory transcription activity. Able to interact with Tbp and RNA polymerase in the absence of DNA promoter. Interacts both with the preinitiation and elongation complexes.

Transcription factor that plays a role in the activation of archaeal genes transcribed by RNA polymerase. Facilitates transcription initiation by enhancing TATA-box recognition by TATA-box-binding protein (Tbp), and transcription factor B (Tfb) and RNA polymerase recruitment. Not absolutely required for transcription in vitro, but particularly important in cases where Tbp or Tfb function is not optimal. It dynamically alters the nucleic acid-binding properties of RNA polymerases by stabilizing the initiation complex and destabilizing elongation complexes. Seems to translocate with the RNA polymerase following initiation and acts by binding to the non template strand of the transcription bubble in elongation complexes. This is Transcription factor E from Pyrobaculum calidifontis (strain DSM 21063 / JCM 11548 / VA1).